Reading from the N-terminus, the 224-residue chain is MKFGVVVFPGSNCDRDVAYVTRDLLGQPTRMVWHQDTDIADLDVVIIPGGFSYGDYLRCGAIARFSPVMQQVVEHAQKGKLVLGICNGFQVLTEAGLLPGALARNRDLHFICDRVPLTVESTNSLWTQAYNPGEVITLPIAHGEGRFYADEATLSEIEDNGQVLFRYAGENPNGSLNNIAGICDRQGNVLGMMPHPERASDPVLGGSDGLKLFQGLLEKVVALA.

Residues 3–224 (FGVVVFPGSN…GLLEKVVALA (222 aa)) form the Glutamine amidotransferase type-1 domain. Cys-86 functions as the Nucleophile in the catalytic mechanism. Catalysis depends on residues His-195 and Glu-197.

In terms of assembly, part of the FGAM synthase complex composed of 1 PurL, 1 PurQ and 2 PurS subunits.

It localises to the cytoplasm. The enzyme catalyses N(2)-formyl-N(1)-(5-phospho-beta-D-ribosyl)glycinamide + L-glutamine + ATP + H2O = 2-formamido-N(1)-(5-O-phospho-beta-D-ribosyl)acetamidine + L-glutamate + ADP + phosphate + H(+). It catalyses the reaction L-glutamine + H2O = L-glutamate + NH4(+). Its pathway is purine metabolism; IMP biosynthesis via de novo pathway; 5-amino-1-(5-phospho-D-ribosyl)imidazole from N(2)-formyl-N(1)-(5-phospho-D-ribosyl)glycinamide: step 1/2. Part of the phosphoribosylformylglycinamidine synthase complex involved in the purines biosynthetic pathway. Catalyzes the ATP-dependent conversion of formylglycinamide ribonucleotide (FGAR) and glutamine to yield formylglycinamidine ribonucleotide (FGAM) and glutamate. The FGAM synthase complex is composed of three subunits. PurQ produces an ammonia molecule by converting glutamine to glutamate. PurL transfers the ammonia molecule to FGAR to form FGAM in an ATP-dependent manner. PurS interacts with PurQ and PurL and is thought to assist in the transfer of the ammonia molecule from PurQ to PurL. The polypeptide is Phosphoribosylformylglycinamidine synthase subunit PurQ (Trichormus variabilis (strain ATCC 29413 / PCC 7937) (Anabaena variabilis)).